Consider the following 183-residue polypeptide: Photosystem I assembly protein Ycf4 (183 aa).

Transmembrane regions (helical) follow at residues Asn17 to Tyr39 and Phe59 to Tyr81.

This sequence belongs to the Ycf4 family.

The protein localises to the plastid. Its subcellular location is the chloroplast thylakoid membrane. In terms of biological role, seems to be required for the assembly of the photosystem I complex. In Cyanidium caldarium (Red alga), this protein is Photosystem I assembly protein Ycf4.